A 122-amino-acid polypeptide reads, in one-letter code: UPF0102 protein xcc-b100_3645 (122 aa).

This sequence belongs to the UPF0102 family.

This chain is UPF0102 protein xcc-b100_3645, found in Xanthomonas campestris pv. campestris (strain B100).